An 82-amino-acid polypeptide reads, in one-letter code: Small ribosomal subunit protein bS16 (82 aa).

The protein belongs to the bacterial ribosomal protein bS16 family.

This chain is Small ribosomal subunit protein bS16, found in Blochmanniella floridana.